Consider the following 255-residue polypeptide: Taurine import ATP-binding protein TauB (255 aa).

In terms of domain architecture, ABC transporter spans 2-229 (LQISHLYADY…RFVAGESSRS (228 aa)). 34–41 (GPSGCGKT) lines the ATP pocket.

This sequence belongs to the ABC transporter superfamily. Taurine importer (TC 3.A.1.17.1) family. In terms of assembly, the complex is composed of two ATP-binding proteins (TauB), two transmembrane proteins (TauC) and a solute-binding protein (TauA).

It is found in the cell inner membrane. The enzyme catalyses taurine(out) + ATP + H2O = taurine(in) + ADP + phosphate + H(+). In terms of biological role, part of the ABC transporter complex TauABC involved in taurine import. Responsible for energy coupling to the transport system. The polypeptide is Taurine import ATP-binding protein TauB (Escherichia coli (strain K12)).